Reading from the N-terminus, the 205-residue chain is Small ribosomal subunit protein uS4 (205 aa).

Over residues Met-1 to Gly-16 the composition is skewed to basic and acidic residues. The disordered stretch occupies residues Met-1–Ser-46. Residues Ser-94–Val-157 enclose the S4 RNA-binding domain.

It belongs to the universal ribosomal protein uS4 family. In terms of assembly, part of the 30S ribosomal subunit. Contacts protein S5. The interaction surface between S4 and S5 is involved in control of translational fidelity.

Its function is as follows. One of the primary rRNA binding proteins, it binds directly to 16S rRNA where it nucleates assembly of the body of the 30S subunit. In terms of biological role, with S5 and S12 plays an important role in translational accuracy. This Brucella abortus (strain S19) protein is Small ribosomal subunit protein uS4.